A 310-amino-acid chain; its full sequence is p-hydroxybenzoic acid efflux pump subunit AaeA (310 aa).

A helical membrane pass occupies residues 12–32; that stretch reads AITVVLVILAFIAIFNAWVYY.

The protein belongs to the membrane fusion protein (MFP) (TC 8.A.1) family.

It is found in the cell inner membrane. Its function is as follows. Forms an efflux pump with AaeB. The polypeptide is p-hydroxybenzoic acid efflux pump subunit AaeA (Shigella sonnei (strain Ss046)).